The chain runs to 136 residues: Type II nicking enzyme V.XorIIP (136 aa).

Belongs to the Vsr family.

Functionally, may nick XorII sequences that contain T/G mispairs resulting from m5C-deamination. If unrepaired, these mismatches can lead to C-to-T transition mutations. The very short patch (VSP) repair process counteracts the mutagenic process by repairing the mismatches in favor of the G-containing strand. This enzyme is an endonuclease that nicks double-stranded DNA within the sequence CGATCG (C-methylation site unknown) next to the thymidine residue that is mismatched to 2'-deoxyguanosine. The incision is mismatch-dependent and strand-specific. This is Type II nicking enzyme V.XorIIP from Xanthomonas oryzae pv. oryzae (strain KACC10331 / KXO85).